The primary structure comprises 432 residues: MPDYVNWLRHASPYINAHRDCTFVVMLPGDGVEHPNFGNIVHDLVLLHSLGVRLVLVHGSRPQIESRLADRGLTPHYHRGMRITDAATLDCVIDAVGALRLAIEARLSMDIAASPMQGSRLRVASGNLVTARPIGVLEGVDYHHTGEVRRVDRKGISRLLDERSIVLLSPLGYSPTGEIFNLACEDVATRAAIELGADKLLLFGAEPGLLDADGRLVRELRPQQVAPHLQRLGSDYQGELLDAAAEACKGGVARSHIVSYAEDGALLTELFTRGGGGTLVSQEQFEVVREATIEDVGGLLELISPLEEQGILVRRSREVLEREIEQFSVVEREGMIIACAALYPIADSEAGELACLAVNPEYRHGGRGDELLERIESRARQMGLSTLFVLTTRTAHWFRERGFAPSGVERLPAARASLYNYQRNSKIFEKPL.

Residues 286 to 432 enclose the N-acetyltransferase domain; that stretch reads EVVREATIED…RNSKIFEKPL (147 aa).

The protein belongs to the acetyltransferase family. ArgA subfamily.

It is found in the cytoplasm. It catalyses the reaction L-glutamate + acetyl-CoA = N-acetyl-L-glutamate + CoA + H(+). The protein operates within amino-acid biosynthesis; L-arginine biosynthesis; N(2)-acetyl-L-ornithine from L-glutamate: step 1/4. The protein is Amino-acid acetyltransferase (argA) of Pseudomonas putida (strain ATCC 47054 / DSM 6125 / CFBP 8728 / NCIMB 11950 / KT2440).